The following is a 310-amino-acid chain: Carbamate kinase 1 (310 aa).

It belongs to the carbamate kinase family.

Its subcellular location is the cytoplasm. It carries out the reaction hydrogencarbonate + NH4(+) + ATP = carbamoyl phosphate + ADP + H2O + H(+). Its pathway is metabolic intermediate metabolism; carbamoyl phosphate degradation; CO(2) and NH(3) from carbamoyl phosphate: step 1/1. This chain is Carbamate kinase 1 (arcC1), found in Staphylococcus aureus (strain MRSA252).